The following is a 392-amino-acid chain: Putative F-box protein At1g71320 (392 aa).

The F-box domain maps to 8–55; that stretch reads NPKTIFIPDDIAEGIFHHLPIKSLARFKVLSKKWTSMIESTYFSHKRL.

The chain is Putative F-box protein At1g71320 from Arabidopsis thaliana (Mouse-ear cress).